A 340-amino-acid chain; its full sequence is MYRKDLDNYLKQRLPKAVFLYGEFDFFIHYYIQTISALFKGNNPDTETSLFYASDYEKSQIATLLEQDSLFGGSSLVILKLDFALHKKFKENDINPFLKALERPSHNRLIIGLYNAKSDTTKYKYTSEIIVKFFQKSPLKDEAICVRFFTPKAWESLKFLQERANFLHLDISGHLLNALFEINNEDLSVSFNDLDKLAVLNAPITLEDIQELSSNAGDMDLQKLILGLFLKKSVLDIYDYLLKEGKKDADILRGLERYFYQLFLFFAHIKTTGLMDAKEVLGYAPPKEIVENYAKNALRLKEAGYKRVFEIFRLWHLQSMQGQKELGFLYLTPIQKIINP.

Seems to interact with H.pylori HolB.

Functionally, could be the functional equivalent of DNA polymerase III delta subunit (HolA). The chain is Protein jhp_1168 from Helicobacter pylori (strain J99 / ATCC 700824) (Campylobacter pylori J99).